We begin with the raw amino-acid sequence, 101 residues long: MDKSKRLFRKSKRSFRRRLPPIGSGDRIDYRNMSLISQFISEQGKILSRRVNRLTLKQQRLITIAIKQARILSSLPFLNNEKQFEKTESIPRTTGPRTRNK.

The span at 1–19 (MDKSKRLFRKSKRSFRRRL) shows a compositional bias: basic residues. The disordered stretch occupies residues 1–23 (MDKSKRLFRKSKRSFRRRLPPIG).

It belongs to the bacterial ribosomal protein bS18 family. Part of the 30S ribosomal subunit.

Its subcellular location is the plastid. The protein localises to the chloroplast. This is Small ribosomal subunit protein bS18c from Liriodendron tulipifera (Tuliptree).